Reading from the N-terminus, the 489-residue chain is 3-octaprenyl-4-hydroxybenzoate carboxy-lyase (489 aa).

N172 serves as a coordination point for Mn(2+). Prenylated FMN-binding positions include 175 to 177, 189 to 191, and 194 to 195; these read VYR, RWL, and RG. E240 provides a ligand contact to Mn(2+). D288 serves as the catalytic Proton donor.

The protein belongs to the UbiD family. In terms of assembly, homohexamer. It depends on prenylated FMN as a cofactor. Mn(2+) is required as a cofactor.

The protein localises to the cell membrane. It catalyses the reaction a 4-hydroxy-3-(all-trans-polyprenyl)benzoate + H(+) = a 2-(all-trans-polyprenyl)phenol + CO2. It functions in the pathway cofactor biosynthesis; ubiquinone biosynthesis. Catalyzes the decarboxylation of 3-octaprenyl-4-hydroxy benzoate to 2-octaprenylphenol, an intermediate step in ubiquinone biosynthesis. The polypeptide is 3-octaprenyl-4-hydroxybenzoate carboxy-lyase (Wigglesworthia glossinidia brevipalpis).